Consider the following 135-residue polypeptide: Transcriptional regulator HosA (135 aa).

Residues 4 to 134 (RNKAFHQLRQ…FMQLVRKMMN (131 aa)) form the HTH marR-type domain. Residues 48–71 (QVALIEAAVSTKATLAEMLARMEN) constitute a DNA-binding region (H-T-H motif).

Involved in the temperature-dependent positive control of flagellum-driven swimming motility and cellular aggregation. Regulates fliC expression by directly interacting with fliC promoter. This is Transcriptional regulator HosA (hosA) from Escherichia coli O111:H-.